Reading from the N-terminus, the 216-residue chain is LexA repressor (216 aa).

Residues 28 to 48 (RAEIAAELGFSSANSAEEHLR) constitute a DNA-binding region (H-T-H motif). Catalysis depends on for autocatalytic cleavage activity residues serine 134 and lysine 171.

It belongs to the peptidase S24 family. Homodimer.

The catalysed reaction is Hydrolysis of Ala-|-Gly bond in repressor LexA.. In terms of biological role, represses a number of genes involved in the response to DNA damage (SOS response), including recA and lexA. In the presence of single-stranded DNA, RecA interacts with LexA causing an autocatalytic cleavage which disrupts the DNA-binding part of LexA, leading to derepression of the SOS regulon and eventually DNA repair. This is LexA repressor from Paraburkholderia xenovorans (strain LB400).